The sequence spans 484 residues: Vanillin dehydrogenase (484 aa).

NADP(+)-binding positions include 156-157 (WN), 180-183 (KPAS), and 234-235 (GS). Residues Lys180 and 234–239 (GSTPVG) each bind NAD(+). The active-site Proton acceptor is Glu258. Residue Leu259 coordinates NADP(+). The Nucleophile role is filled by Cys292. 2 residues coordinate NAD(+): Gln339 and Glu386. Glu386 serves as a coordination point for NADP(+).

It belongs to the aldehyde dehydrogenase family. Exists as a homodimer, homotrimer and homotetramer.

It carries out the reaction vanillin + NAD(+) + H2O = vanillate + NADH + 2 H(+). The catalysed reaction is vanillin + NADP(+) + H2O = vanillate + NADPH + 2 H(+). The enzyme catalyses 3,4-dihydroxybenzaldehyde + NAD(+) + H2O = 3,4-dihydroxybenzoate + NADH + 2 H(+). It catalyses the reaction 3,4-dihydroxybenzaldehyde + NADP(+) + H2O = 3,4-dihydroxybenzoate + NADPH + 2 H(+). It carries out the reaction 4-hydroxybenzaldehyde + NAD(+) + H2O = 4-hydroxybenzoate + NADH + 2 H(+). The catalysed reaction is 4-hydroxybenzaldehyde + NADP(+) + H2O = 4-hydroxybenzoate + NADPH + 2 H(+). Catalyzes oxidation of vanillin to vanillate. Also oxidizes 3,4-dihydroxybenzaldehyde and 4-hydroxybenzaldehyde significantly. Other aromatic aldehyde substrates in the order of decreasing activity include 3-hydroxybenzaldehyde, 4-nitrobenzaldehyde, terephthalaldehyde, 2,4-dichlorobenzaldehyde, benzaldehyde and 3-phenylpropanal. Low activity with phthalaldehyde, cinnamaldehyde and syringaldehyde. No activity with phenylacetaldehyde, formaldehyde or aldehyde. Active with both NAD(+) and NADP(+). Involved in the degradation pathway of lignin-derived aromatic compounds of plant cell walls. Catalyzes the conversion of vanillin to vanillate due to toxicity of vanillin to the cells. The chain is Vanillin dehydrogenase from Corynebacterium glutamicum (strain ATCC 13032 / DSM 20300 / JCM 1318 / BCRC 11384 / CCUG 27702 / LMG 3730 / NBRC 12168 / NCIMB 10025 / NRRL B-2784 / 534).